The sequence spans 485 residues: Glutamyl-tRNA(Gln) amidotransferase subunit A (485 aa).

Active-site charge relay system residues include Lys79 and Ser154. Ser178 (acyl-ester intermediate) is an active-site residue.

Belongs to the amidase family. GatA subfamily. As to quaternary structure, heterotrimer of A, B and C subunits.

It carries out the reaction L-glutamyl-tRNA(Gln) + L-glutamine + ATP + H2O = L-glutaminyl-tRNA(Gln) + L-glutamate + ADP + phosphate + H(+). Its function is as follows. Allows the formation of correctly charged Gln-tRNA(Gln) through the transamidation of misacylated Glu-tRNA(Gln) in organisms which lack glutaminyl-tRNA synthetase. The reaction takes place in the presence of glutamine and ATP through an activated gamma-phospho-Glu-tRNA(Gln). The polypeptide is Glutamyl-tRNA(Gln) amidotransferase subunit A (Sulfurihydrogenibium sp. (strain YO3AOP1)).